Consider the following 250-residue polypeptide: DNA repair protein RecO (250 aa).

The protein belongs to the RecO family.

In terms of biological role, involved in DNA repair and RecF pathway recombination. This Staphylococcus aureus (strain MRSA252) protein is DNA repair protein RecO.